The following is a 122-amino-acid chain: Large ribosomal subunit protein uL14 (122 aa).

Belongs to the universal ribosomal protein uL14 family. In terms of assembly, part of the 50S ribosomal subunit. Forms a cluster with proteins L3 and L19. In the 70S ribosome, L14 and L19 interact and together make contacts with the 16S rRNA in bridges B5 and B8.

Binds to 23S rRNA. Forms part of two intersubunit bridges in the 70S ribosome. In Methylobacterium sp. (strain 4-46), this protein is Large ribosomal subunit protein uL14.